A 1015-amino-acid chain; its full sequence is DNA polymerase catalytic subunit (1015 aa).

It belongs to the DNA polymerase type-B family. In terms of assembly, forms a complex with the major DNA-binding protein BALF2, the DNA polymerase processivity factor BMRF1, and the alkaline exonuclease BGLF5. Interacts with the putative helicase-primase complex composed of BBLF4, BSLF1 and BBLF2/3 proteins; these interactions may coordinate leading and lagging strand DNA synthesis at the replication fork.

The protein localises to the host nucleus. The enzyme catalyses DNA(n) + a 2'-deoxyribonucleoside 5'-triphosphate = DNA(n+1) + diphosphate. Functionally, replicates viral genomic DNA in the late phase of lytic infection, producing long concatemeric DNA. The replication complex is composed of six viral proteins: the DNA polymerase, processivity factor, primase, primase-associated factor, helicase, and ssDNA-binding protein. The chain is DNA polymerase catalytic subunit from Homo sapiens (Human).